We begin with the raw amino-acid sequence, 212 residues long: Thiamine-phosphate synthase (212 aa).

4-amino-2-methyl-5-(diphosphooxymethyl)pyrimidine contacts are provided by residues 35 to 39 and N67; that span reads QLRRK. D68 and D87 together coordinate Mg(2+). S106 contributes to the 4-amino-2-methyl-5-(diphosphooxymethyl)pyrimidine binding site. 132 to 134 contributes to the 2-[(2R,5Z)-2-carboxy-4-methylthiazol-5(2H)-ylidene]ethyl phosphate binding site; the sequence is TGS. K135 serves as a coordination point for 4-amino-2-methyl-5-(diphosphooxymethyl)pyrimidine. 2-[(2R,5Z)-2-carboxy-4-methylthiazol-5(2H)-ylidene]ethyl phosphate contacts are provided by residues G163 and 183–184; that span reads IS.

This sequence belongs to the thiamine-phosphate synthase family. The cofactor is Mg(2+).

The catalysed reaction is 2-[(2R,5Z)-2-carboxy-4-methylthiazol-5(2H)-ylidene]ethyl phosphate + 4-amino-2-methyl-5-(diphosphooxymethyl)pyrimidine + 2 H(+) = thiamine phosphate + CO2 + diphosphate. It carries out the reaction 2-(2-carboxy-4-methylthiazol-5-yl)ethyl phosphate + 4-amino-2-methyl-5-(diphosphooxymethyl)pyrimidine + 2 H(+) = thiamine phosphate + CO2 + diphosphate. It catalyses the reaction 4-methyl-5-(2-phosphooxyethyl)-thiazole + 4-amino-2-methyl-5-(diphosphooxymethyl)pyrimidine + H(+) = thiamine phosphate + diphosphate. It participates in cofactor biosynthesis; thiamine diphosphate biosynthesis; thiamine phosphate from 4-amino-2-methyl-5-diphosphomethylpyrimidine and 4-methyl-5-(2-phosphoethyl)-thiazole: step 1/1. Condenses 4-methyl-5-(beta-hydroxyethyl)thiazole monophosphate (THZ-P) and 2-methyl-4-amino-5-hydroxymethyl pyrimidine pyrophosphate (HMP-PP) to form thiamine monophosphate (TMP). In Chlorobium luteolum (strain DSM 273 / BCRC 81028 / 2530) (Pelodictyon luteolum), this protein is Thiamine-phosphate synthase.